A 473-amino-acid chain; its full sequence is Photosystem II CP43 reaction center protein (473 aa).

A propeptide spanning residues 1-14 (MKILYSLRRFYHVE) is cleaved from the precursor. Residue Thr15 is modified to N-acetylthreonine. Thr15 bears the Phosphothreonine mark. 5 consecutive transmembrane segments (helical) span residues 69–93 (LFEV…PHLA), 134–155 (LLGP…KDRN), 178–200 (KALY…RKIT), 255–275 (KPFA…LSYS), and 291–312 (WFNN…ASQA). Glu367 contributes to the [CaMn4O5] cluster binding site. A helical membrane pass occupies residues 447-471 (RARAAAAGFEKGIDRDLEPVLYMNP).

The protein belongs to the PsbB/PsbC family. PsbC subfamily. As to quaternary structure, PSII is composed of 1 copy each of membrane proteins PsbA, PsbB, PsbC, PsbD, PsbE, PsbF, PsbH, PsbI, PsbJ, PsbK, PsbL, PsbM, PsbT, PsbX, PsbY, PsbZ, Psb30/Ycf12, at least 3 peripheral proteins of the oxygen-evolving complex and a large number of cofactors. It forms dimeric complexes. The cofactor is Binds multiple chlorophylls and provides some of the ligands for the Ca-4Mn-5O cluster of the oxygen-evolving complex. It may also provide a ligand for a Cl- that is required for oxygen evolution. PSII binds additional chlorophylls, carotenoids and specific lipids..

The protein resides in the plastid. The protein localises to the chloroplast thylakoid membrane. Functionally, one of the components of the core complex of photosystem II (PSII). It binds chlorophyll and helps catalyze the primary light-induced photochemical processes of PSII. PSII is a light-driven water:plastoquinone oxidoreductase, using light energy to abstract electrons from H(2)O, generating O(2) and a proton gradient subsequently used for ATP formation. The chain is Photosystem II CP43 reaction center protein from Brachypodium distachyon (Purple false brome).